The following is a 268-amino-acid chain: Ribosomal RNA small subunit methyltransferase A (268 aa).

S-adenosyl-L-methionine-binding residues include Asn19, Leu21, Gly46, Glu67, Asp92, and Asn113.

This sequence belongs to the class I-like SAM-binding methyltransferase superfamily. rRNA adenine N(6)-methyltransferase family. RsmA subfamily.

The protein localises to the cytoplasm. The enzyme catalyses adenosine(1518)/adenosine(1519) in 16S rRNA + 4 S-adenosyl-L-methionine = N(6)-dimethyladenosine(1518)/N(6)-dimethyladenosine(1519) in 16S rRNA + 4 S-adenosyl-L-homocysteine + 4 H(+). Its function is as follows. Specifically dimethylates two adjacent adenosines (A1518 and A1519) in the loop of a conserved hairpin near the 3'-end of 16S rRNA in the 30S particle. May play a critical role in biogenesis of 30S subunits. This Tolumonas auensis (strain DSM 9187 / NBRC 110442 / TA 4) protein is Ribosomal RNA small subunit methyltransferase A.